A 240-amino-acid chain; its full sequence is Glutathione-independent glyoxalase hsp3102 (240 aa).

Catalysis depends on residues Cys-141, His-142, and Glu-175.

Belongs to the peptidase C56 family. HSP31-like subfamily.

It localises to the cytoplasm. Its subcellular location is the nucleus. The catalysed reaction is methylglyoxal + H2O = (R)-lactate + H(+). Catalyzes the conversion of methylglyoxal (MG) to D-lactate in a single glutathione (GSH)-independent step. May play a role in detoxifying endogenously produced glyoxals. Involved in protection against reactive oxygen species (ROS). In Schizosaccharomyces pombe (strain 972 / ATCC 24843) (Fission yeast), this protein is Glutathione-independent glyoxalase hsp3102.